A 309-amino-acid polypeptide reads, in one-letter code: MPIPKNRPMHVEEEVSSQTNTEILLFALVIILSVIFINFFFFYLCRCCVYFYHTLENQEGDDERPLIQHHMVNRSTGSLSPSVDRLGNVLGYDIPSRRRRSVVSKEALSCISLEIPYIKWLKKRKGHAKGESTFLDNRSENQSVIVQGQGETPSVIITYDVRRPNLGSTSFVEMSSALSNIYNTDASDGDSSDDSCLLEDEEDFCIICYADYAFDDILRVLPCEHVFHTQCIDTWMTTMKASCPLCNEDYYKYFLQMDAASSVTHENAAWSIPLSPGDSRTHSAETDRSLLSAMSVRNSRMPYIVSSTL.

Residues 23-43 form a helical membrane-spanning segment; that stretch reads ILLFALVIILSVIFINFFFFY. Residues 205–247 form an RING-type; atypical zinc finger; the sequence is CIICYADYAFDDILRVLPCEHVFHTQCIDTWMTTMKASCPLCN.

Its subcellular location is the membrane. Has a role in meiosis. This is RING finger protein mug145 (mug145) from Schizosaccharomyces pombe (strain 972 / ATCC 24843) (Fission yeast).